We begin with the raw amino-acid sequence, 483 residues long: Glycogen synthase kinase-3 alpha (483 aa).

Positions 1-15 (MSGGGPSGGGPGGSG) are enriched in gly residues. The segment at 1 to 96 (MSGGGPSGGG…PPPGVKLGRD (96 aa)) is disordered. N-acetylserine is present on S2. At S2 the chain carries Phosphoserine. S21 is subject to Phosphoserine; by PKB/AKT1. Residues 25 to 82 (PGGGGGGGGGGPGGSASGPGGTGGGKASVGAMGGGVGASSSGGGPSGSGGGGSGGPGA) show a composition bias toward gly residues. S72, S77, and S97 each carry phosphoserine. One can recognise a Protein kinase domain in the interval 119–403 (YTDIKVIGNG…PLEACAHSFF (285 aa)). Residues 125-133 (IGNGSFGVV) and K148 contribute to the ATP site. Catalysis depends on D244, which acts as the Proton acceptor. Y279 is subject to Phosphotyrosine. The disordered stretch occupies residues 443–483 (PHLRSPSGPATLTSSSQALTETQTGQDWQAPDATPTLTNSS). Polar residues predominate over residues 450-469 (GPATLTSSSQALTETQTGQD).

Belongs to the protein kinase superfamily. CMGC Ser/Thr protein kinase family. GSK-3 subfamily. As to quaternary structure, monomer. Interacts with ARRB2, AXIN1 and CTNNB1/beta-catenin. Interacts with CTNND2. Interacts with LMBR1L. Interacts with DDX3X. Interacts with TNFRSF10B. In terms of processing, phosphorylated by AKT1 at Ser-21: upon insulin-mediated signaling, the activated PKB/AKT1 protein kinase phosphorylates and deactivates GSK3A, resulting in the dephosphorylation and activation of GYS1. Activated by phosphorylation at Tyr-279.

It catalyses the reaction L-seryl-[tau protein] + ATP = O-phospho-L-seryl-[tau protein] + ADP + H(+). The enzyme catalyses L-threonyl-[tau protein] + ATP = O-phospho-L-threonyl-[tau protein] + ADP + H(+). It carries out the reaction L-seryl-[protein] + ATP = O-phospho-L-seryl-[protein] + ADP + H(+). The catalysed reaction is L-threonyl-[protein] + ATP = O-phospho-L-threonyl-[protein] + ADP + H(+). Its activity is regulated as follows. Activated by phosphorylation at Tyr-279. In response to insulin, inhibited by phosphorylation at Ser-21 by PKB/AKT1; phosphorylation at this site causes a conformational change, preventing access of substrates to the active site. Inhibited by lithium. Constitutively active protein kinase that acts as a negative regulator in the hormonal control of glucose homeostasis, Wnt signaling and regulation of transcription factors and microtubules, by phosphorylating and inactivating glycogen synthase (GYS1 or GYS2), CTNNB1/beta-catenin, APC and AXIN1. Requires primed phosphorylation of the majority of its substrates. Contributes to insulin regulation of glycogen synthesis by phosphorylating and inhibiting GYS1 activity and hence glycogen synthesis. Regulates glycogen metabolism in liver, but not in muscle. May also mediate the development of insulin resistance by regulating activation of transcription factors. In Wnt signaling, regulates the level and transcriptional activity of nuclear CTNNB1/beta-catenin. Facilitates amyloid precursor protein (APP) processing and the generation of APP-derived amyloid plaques found in Alzheimer disease. May be involved in the regulation of replication in pancreatic beta-cells. Is necessary for the establishment of neuronal polarity and axon outgrowth. Through phosphorylation of the anti-apoptotic protein MCL1, may control cell apoptosis in response to growth factors deprivation. Acts as a regulator of autophagy by mediating phosphorylation of KAT5/TIP60 under starvation conditions, activating KAT5/TIP60 acetyltransferase activity and promoting acetylation of key autophagy regulators, such as ULK1 and RUBCNL/Pacer. Negatively regulates extrinsic apoptotic signaling pathway via death domain receptors. Promotes the formation of an anti-apoptotic complex, made of DDX3X, BRIC2 and GSK3B, at death receptors, including TNFRSF10B. The anti-apoptotic function is most effective with weak apoptotic signals and can be overcome by stronger stimulation. The sequence is that of Glycogen synthase kinase-3 alpha (Gsk3a) from Rattus norvegicus (Rat).